Here is a 169-residue protein sequence, read N- to C-terminus: uncharacterized protein (169 aa).

A run of 3 helical transmembrane segments spans residues 25-45, 57-77, and 91-111; these read ALMG…MSYF, FFWV…FGVF, and LFLI…FLMV.

The protein belongs to the major facilitator superfamily. Allantoate permease family.

The protein localises to the membrane. This is an uncharacterized protein from Saccharomyces cerevisiae (strain ATCC 204508 / S288c) (Baker's yeast).